The primary structure comprises 447 residues: Argininosuccinate synthase (447 aa).

ATP is bound by residues 17 to 25 and Ala-43; that span reads AFSGGLDTS. Residue Tyr-99 participates in L-citrulline binding. Residues Gly-129 and Thr-131 each contribute to the ATP site. L-aspartate-binding residues include Thr-131, Asn-135, and Asp-136. Asn-135 lines the L-citrulline pocket. Residue Asp-136 participates in ATP binding. L-citrulline is bound by residues Arg-139 and Ser-192. Asp-194 is a binding site for ATP. Residues Thr-201, Glu-203, and Glu-280 each contribute to the L-citrulline site.

It belongs to the argininosuccinate synthase family. Type 2 subfamily. As to quaternary structure, homotetramer.

Its subcellular location is the cytoplasm. The enzyme catalyses L-citrulline + L-aspartate + ATP = 2-(N(omega)-L-arginino)succinate + AMP + diphosphate + H(+). Its pathway is amino-acid biosynthesis; L-arginine biosynthesis; L-arginine from L-ornithine and carbamoyl phosphate: step 2/3. The sequence is that of Argininosuccinate synthase (argG) from Salmonella typhi.